Reading from the N-terminus, the 149-residue chain is Calmodulin (149 aa).

Position 2 is an N-acetylalanine (alanine 2). EF-hand domains follow at residues 8–43 (EQIA…LGQN), 44–79 (PTEA…KMKD), 81–116 (DSEE…LGEK), and 117–149 (LTDE…MTTK). Ca(2+)-binding residues include aspartate 21, aspartate 23, aspartate 25, threonine 27, glutamate 32, aspartate 57, aspartate 59, asparagine 61, threonine 63, glutamate 68, aspartate 94, aspartate 96, asparagine 98, and glutamate 105. N6,N6,N6-trimethyllysine is present on lysine 116. Ca(2+) contacts are provided by aspartate 130, aspartate 132, aspartate 134, glutamine 136, and glutamate 141.

It belongs to the calmodulin family. In terms of assembly, interacts (in the presence of Ca(2+)) with pde-1, madf-3, rpl-7A, tax-6, efk-1, npp-1, obr-4, sos-1, akt-1, unc-13, tag-196, ugt-48, nmy-2, F27D4.4, ddx-23, efa-6 and R11H6.4.

Functionally, calmodulin mediates the control of a large number of enzymes, ion channels and other proteins by Ca(2+). Among the enzymes to be stimulated by the calmodulin-Ca(2+) complex are a number of protein kinases and phosphatases. This is Calmodulin (cmd-1) from Caenorhabditis elegans.